Reading from the N-terminus, the 664-residue chain is Protein LYK5 (664 aa).

Positions 1–26 (MAACTLHALSVTLFLLLFFAVSPAKA) are cleaved as a signal peptide. At 27–277 (QQPYVNNHQL…DPPGSSSSHK (251 aa)) the chain is on the extracellular side. N-linked (GlcNAc...) asparagine glycosylation is found at Asn-45, Asn-81, Asn-111, Asn-125, and Asn-129. 3 disulfides stabilise this stretch: Cys-52-Cys-114, Cys-58-Cys-181, and Cys-112-Cys-179. A chitin-binding site is contributed by 135–141 (GDETYFS). The N-linked (GlcNAc...) asparagine glycan is linked to Asn-144. 164 to 170 (ERQLTPG) contributes to the chitin binding site. The LysM domain maps to 195-238 (LTYLVAMGDSISGIAEMFNSTSAAITEGNELTSDNIFFFTPVLV). A glycan (N-linked (GlcNAc...) asparagine) is linked at Asn-213. Positions 251 to 269 (PSPPPPPVVATPPQTPVDP) are enriched in pro residues. Residues 251 to 270 (PSPPPPPVVATPPQTPVDPP) are disordered. Residues 278 to 298 (WIYIGIGIGAGLLLLLSILAL) form a helical membrane-spanning segment. Over 299-664 (CFYKRRSKKK…DLLRSGSLGN (366 aa)) the chain is Cytoplasmic. The Protein kinase domain occupies 351–643 (KSAIESLTLY…TQVLTTLSMI (293 aa)). ATP contacts are provided by residues 357–365 (LTLYRFNDL) and Lys-395.

Belongs to the protein kinase superfamily. Ser/Thr protein kinase family.

The protein resides in the cell membrane. Functionally, may recognize microbe-derived N-acetylglucosamine (NAG)-containing ligands. This Arabidopsis thaliana (Mouse-ear cress) protein is Protein LYK5 (LYK5).